Reading from the N-terminus, the 1021-residue chain is Solute carrier family 12 member 3 (1021 aa).

At 1–137 (MAELPTTETP…KNPEEPVRFG (137 aa)) the chain is on the cytoplasmic side. Ser-43 is modified (phosphoserine). Thr-46 bears the Phosphothreonine; by OXSR1 and STK39 mark. The residue at position 49 (Ser-49) is a Phosphoserine. Thr-50 bears the Phosphothreonine mark. A phosphothreonine; by OXSR1 and STK39 mark is found at Thr-55 and Thr-60. Ser-73 carries the phosphoserine modification. Ser-91 bears the Phosphoserine; by OXSR1 and STK39 mark. Thr-124 carries the phosphothreonine modification. A Phosphoserine modification is found at Ser-126. A discontinuously helical membrane pass occupies residues 138–167 (WVKGVMIRCMLNIWGVILYLRLPWITAQAG). Leu-148 is a binding site for Na(+). Asn-149 is a binding site for polythiazide. Residue Trp-151 participates in Na(+) binding. The helical transmembrane segment at 168–189 (IVLTWIIILLSVTVTSITGLSI) threads the bilayer. The Cytoplasmic segment spans residues 190 to 220 (SAISTNGKVKSGGTYFLISRSLGPELGGSIG). A helical membrane pass occupies residues 221–243 (LIFAFANAVGVAMHTVGFAETVR). Positions 227 and 234 each coordinate polythiazide. The Extracellular portion of the chain corresponds to 244–255 (DLLQEYGAPIVD). A run of 2 helical transmembrane segments spans residues 256-280 (PIND…AGME) and 281-303 (WESK…YLVG). The Extracellular portion of the chain corresponds to 304 to 338 (TLIPPSEDKASKGFFSYRADIFVQNLVPDWRGPDG). Residues 339–360 (TFFGMFSIFFPSATGILAGANI) traverse the membrane as a discontinuously helical segment. Thr-352 is a binding site for polythiazide. Chloride-binding residues include Gly-353, Ile-354, and Leu-355. Asn-359 serves as a coordination point for polythiazide. Residues 361–371 (SGDLKDPAIAI) lie on the Cytoplasmic side of the membrane. A helical membrane pass occupies residues 372-393 (PKGTLMAIFWTTISYLAISATI). At 394–453 (GSCVVRDASGVLNDTVTPGWGACEGLACSYGWNFTECTQQHSCHYGLINYYQTMSMVSGF) the chain is on the extracellular side. A glycan (N-linked (GlcNAc...) asparagine) is linked at Asn-406. Cys-416 and Cys-421 are joined by a disulfide. Residue Asn-426 is glycosylated (N-linked (GlcNAc...) asparagine). Cys-430 and Cys-436 form a disulfide bridge. The chain crosses the membrane as a helical span at residues 454 to 477 (APLITAGIFGATLSSALACLVSAA). Na(+)-binding residues include Ala-464, Ser-467, and Ser-468. Over 478–507 (KVFQCLCEDQLYPLIGFFGKGYGKNKEPVR) the chain is Cytoplasmic. Residues 508–522 (GYLLAYAIAVAFIII) traverse the membrane as a helical segment. Residues 523-527 (AELNT) lie on the Extracellular side of the membrane. Residues 528–544 (IAPIISNFFLCSYALIN) form a helical membrane-spanning segment. Tyr-540 lines the chloride pocket. Residues 545–567 (FSCFHASITNSPGWRPSFQYYNK) are Cytoplasmic-facing. Helical transmembrane passes span 568–587 (WAAL…LTWW) and 588–599 (AALIAIGVVLFL). The Cytoplasmic portion of the chain corresponds to 600 to 1021 (LLYVIYKKPE…QENVLTFYCQ (422 aa)). Positions 615-630 (SVQAGSYNLALSYSVG) are scissor helix. Residues Leu-648, Arg-655, Val-677, Gly-741, Leu-780, and Asn-781 each contribute to the ATP site.

It belongs to the SLC12A transporter family. Homodimer; adopts a domain-swap conformation at the scissor helices connecting the transmembrane domain and C-terminal domain. Interacts with KLHL3. Interacts with IL18R1; this interaction is increased by IL18 treatment. Ubiquitinated; ubiquitination is essential for regulation of endocytosis. The BCR(KLHL3) complex was initially identified as a candidate ubiquitin ligase for SLC12A3. However, it was later shown that it is not the case. In terms of processing, phosphorylated at Thr-46, Thr-55, Thr-60 and Ser-91 by OXSR1/OSR1 and STK39/SPAK downstream of WNK4, promoting its activity. Phosphorylated in response to IL18. As to expression, predominantly expressed in the kidney (at protein level). Localizes to the distal convoluted tubules (at protein level). Not detected in normal aorta, but abundantly expressed in fatty streaks and advanced atherosclerotic lesions (at protein level).

The protein localises to the cell membrane. Its subcellular location is the apical cell membrane. It catalyses the reaction chloride(out) + Na(+)(out) = chloride(in) + Na(+)(in). Its activity is regulated as follows. Phosphorylation by OXSR1/OSR1 and STK39/SPAK in kidney distal convoluted tubules downstream of WNK4 promotes its activity. Also activated by OXSR1/OSR1 and STK39/SPAK downstream of WNK3. Target of thiazide diuretics used in the treatment of high blood pressure. Thiazide drugs, such as polythiazide, specifically inhibit SLC12A3/NCC transporter activity by competing with chloride for binding and by locking SLC12A3/NCC in an outward-facing conformation. Electroneutral sodium and chloride ion cotransporter, which acts as a key mediator of sodium and chloride reabsorption in kidney distal convoluted tubules. Also acts as a receptor for the pro-inflammatory cytokine IL18, thereby contributing to IL18-induced cytokine production, including IFNG, IL6, IL18 and CCL2. May act either independently of IL18R1, or in a complex with IL18R1. The polypeptide is Solute carrier family 12 member 3 (Homo sapiens (Human)).